The primary structure comprises 421 residues: D-amino acid dehydrogenase (421 aa).

3-17 (VLVLGGGVVGVTSAY) lines the FAD pocket.

It belongs to the DadA oxidoreductase family. FAD is required as a cofactor.

It carries out the reaction a D-alpha-amino acid + A + H2O = a 2-oxocarboxylate + AH2 + NH4(+). Its pathway is amino-acid degradation; D-alanine degradation; NH(3) and pyruvate from D-alanine: step 1/1. Functionally, oxidative deamination of D-amino acids. The polypeptide is D-amino acid dehydrogenase (Methylobacterium sp. (strain 4-46)).